Reading from the N-terminus, the 562-residue chain is NAD-dependent malic enzyme (562 aa).

Y101 (proton donor) is an active-site residue. R154 contacts NAD(+). Residue K172 is the Proton acceptor of the active site. Residues E243, D244, and D267 each contribute to the a divalent metal cation site. Residues D267 and N415 each coordinate NAD(+).

It belongs to the malic enzymes family. Homotetramer. Mg(2+) serves as cofactor. The cofactor is Mn(2+).

It carries out the reaction (S)-malate + NAD(+) = pyruvate + CO2 + NADH. It catalyses the reaction oxaloacetate + H(+) = pyruvate + CO2. The polypeptide is NAD-dependent malic enzyme (Shewanella loihica (strain ATCC BAA-1088 / PV-4)).